Reading from the N-terminus, the 238-residue chain is Demethylmenaquinone methyltransferase (238 aa).

Residues threonine 65, aspartate 85, and 109 to 110 contribute to the S-adenosyl-L-methionine site; that span reads DA.

This sequence belongs to the class I-like SAM-binding methyltransferase superfamily. MenG/UbiE family.

It catalyses the reaction a 2-demethylmenaquinol + S-adenosyl-L-methionine = a menaquinol + S-adenosyl-L-homocysteine + H(+). It participates in quinol/quinone metabolism; menaquinone biosynthesis; menaquinol from 1,4-dihydroxy-2-naphthoate: step 2/2. Functionally, methyltransferase required for the conversion of demethylmenaquinol (DMKH2) to menaquinol (MKH2). The sequence is that of Demethylmenaquinone methyltransferase from Roseiflexus castenholzii (strain DSM 13941 / HLO8).